A 264-amino-acid chain; its full sequence is Thiazole synthase (264 aa).

The Schiff-base intermediate with DXP role is filled by lysine 106. 1-deoxy-D-xylulose 5-phosphate contacts are provided by residues glycine 167, 193-194 (AG), and 215-216 (NT).

The protein belongs to the ThiG family. In terms of assembly, homotetramer. Forms heterodimers with either ThiH or ThiS.

It localises to the cytoplasm. The enzyme catalyses [ThiS sulfur-carrier protein]-C-terminal-Gly-aminoethanethioate + 2-iminoacetate + 1-deoxy-D-xylulose 5-phosphate = [ThiS sulfur-carrier protein]-C-terminal Gly-Gly + 2-[(2R,5Z)-2-carboxy-4-methylthiazol-5(2H)-ylidene]ethyl phosphate + 2 H2O + H(+). It functions in the pathway cofactor biosynthesis; thiamine diphosphate biosynthesis. Catalyzes the rearrangement of 1-deoxy-D-xylulose 5-phosphate (DXP) to produce the thiazole phosphate moiety of thiamine. Sulfur is provided by the thiocarboxylate moiety of the carrier protein ThiS. In vitro, sulfur can be provided by H(2)S. The polypeptide is Thiazole synthase (Xanthomonas campestris pv. campestris (strain 8004)).